A 133-amino-acid chain; its full sequence is Large ribosomal subunit protein bL21 (133 aa).

Residues 1-22 (MAEKPAAKPKAAAAKAEAKDQS) form a disordered region.

It belongs to the bacterial ribosomal protein bL21 family. In terms of assembly, part of the 50S ribosomal subunit. Contacts protein L20.

Functionally, this protein binds to 23S rRNA in the presence of protein L20. In Prochlorococcus marinus (strain MIT 9303), this protein is Large ribosomal subunit protein bL21.